The sequence spans 287 residues: Phosphatidylserine decarboxylase proenzyme (287 aa).

Active-site charge relay system; for autoendoproteolytic cleavage activity residues include Asp86, His143, and Ser250. Residue Ser250 is the Schiff-base intermediate with substrate; via pyruvic acid; for decarboxylase activity of the active site. Ser250 carries the post-translational modification Pyruvic acid (Ser); by autocatalysis.

Belongs to the phosphatidylserine decarboxylase family. PSD-B subfamily. Prokaryotic type I sub-subfamily. As to quaternary structure, heterodimer of a large membrane-associated beta subunit and a small pyruvoyl-containing alpha subunit. Requires pyruvate as cofactor. Is synthesized initially as an inactive proenzyme. Formation of the active enzyme involves a self-maturation process in which the active site pyruvoyl group is generated from an internal serine residue via an autocatalytic post-translational modification. Two non-identical subunits are generated from the proenzyme in this reaction, and the pyruvate is formed at the N-terminus of the alpha chain, which is derived from the carboxyl end of the proenzyme. The autoendoproteolytic cleavage occurs by a canonical serine protease mechanism, in which the side chain hydroxyl group of the serine supplies its oxygen atom to form the C-terminus of the beta chain, while the remainder of the serine residue undergoes an oxidative deamination to produce ammonia and the pyruvoyl prosthetic group on the alpha chain. During this reaction, the Ser that is part of the protease active site of the proenzyme becomes the pyruvoyl prosthetic group, which constitutes an essential element of the active site of the mature decarboxylase.

The protein localises to the cell membrane. The enzyme catalyses a 1,2-diacyl-sn-glycero-3-phospho-L-serine + H(+) = a 1,2-diacyl-sn-glycero-3-phosphoethanolamine + CO2. It functions in the pathway phospholipid metabolism; phosphatidylethanolamine biosynthesis; phosphatidylethanolamine from CDP-diacylglycerol: step 2/2. In terms of biological role, catalyzes the formation of phosphatidylethanolamine (PtdEtn) from phosphatidylserine (PtdSer). The chain is Phosphatidylserine decarboxylase proenzyme from Wigglesworthia glossinidia brevipalpis.